We begin with the raw amino-acid sequence, 897 residues long: Translation initiation factor IF-2 (897 aa).

The segment at 52–310 (EHGSAPDKLT…LLQQGFQKPA (259 aa)) is disordered. Residues 68–82 (STLNVPGTGGKSKSV) are compositionally biased toward polar residues. Composition is skewed to basic and acidic residues over residues 85–159 (EVRK…KDKV) and 166–217 (EMTK…ENEK). The segment covering 256 to 272 (GRTRTASKTARPQKKGN) has biased composition (basic residues). Residues 273–286 (KHAESKADREEARA) show a composition bias toward basic and acidic residues. In terms of domain architecture, tr-type G spans 396-565 (PRAPVVTIMG…LLQAEVLELK (170 aa)). The interval 405-412 (GHVDHGKT) is G1. 405–412 (GHVDHGKT) contributes to the GTP binding site. Residues 430 to 434 (GITQH) form a G2 region. The tract at residues 451 to 454 (DTPG) is G3. Residues 451–455 (DTPGH) and 505–508 (NKID) contribute to the GTP site. A G4 region spans residues 505–508 (NKID). The G5 stretch occupies residues 541-543 (SAK).

The protein belongs to the TRAFAC class translation factor GTPase superfamily. Classic translation factor GTPase family. IF-2 subfamily.

The protein localises to the cytoplasm. Functionally, one of the essential components for the initiation of protein synthesis. Protects formylmethionyl-tRNA from spontaneous hydrolysis and promotes its binding to the 30S ribosomal subunits. Also involved in the hydrolysis of GTP during the formation of the 70S ribosomal complex. The polypeptide is Translation initiation factor IF-2 (infB) (Enterobacter cloacae).